A 614-amino-acid chain; its full sequence is Cathepsin F (614 aa).

The signal sequence occupies residues 1 to 20 (MRLFAAATVALVLLLGQAAG). Positions 21 to 393 (EELAEERAGQ…AAVVPAYHGE (373 aa)) are cleaved as a propeptide — activation peptide. The tract at residues 25–50 (EERAGQAQGDAESTESSETTTDQAVS) is disordered. Over residues 29–45 (GQAQGDAESTESSETTT) the composition is skewed to low complexity. Asn151 carries an N-linked (GlcNAc...) asparagine glycan. 2 disulfide bridges follow: Cys415–Cys456 and Cys449–Cys489. The active site involves Cys418. Asn492 and Asn510 each carry an N-linked (GlcNAc...) asparagine glycan. Residues Cys548 and Cys602 are joined by a disulfide bond. Catalysis depends on residues His555 and Asn581.

Belongs to the peptidase C1 family.

The enzyme catalyses The recombinant enzyme cleaves synthetic substrates with Phe and Leu (better than Val) in P2, with high specificity constant (kcat/Km) comparable to that of cathepsin L.. May have a role in autophagic cell death. This chain is Cathepsin F, found in Drosophila melanogaster (Fruit fly).